Here is a 649-residue protein sequence, read N- to C-terminus: DNA mismatch repair protein MutL (649 aa).

This sequence belongs to the DNA mismatch repair MutL/HexB family.

In terms of biological role, this protein is involved in the repair of mismatches in DNA. It is required for dam-dependent methyl-directed DNA mismatch repair. May act as a 'molecular matchmaker', a protein that promotes the formation of a stable complex between two or more DNA-binding proteins in an ATP-dependent manner without itself being part of a final effector complex. The polypeptide is DNA mismatch repair protein MutL (Streptococcus pneumoniae (strain JJA)).